The sequence spans 568 residues: Phosphoprotein (568 aa).

The tract at residues 1 to 24 is disordered; it reads MDQDAFFFERDPEAEGEAPRKQES. Positions 7–23 are enriched in basic and acidic residues; it reads FFERDPEAEGEAPRKQE. The segment at 33–41 is N0 binding; the sequence is DVVLSYKPT. The interval 45-324 is disordered; the sequence is EDRSWLHGII…ANEEETSNTS (280 aa). The span at 58–105 shows a compositional bias: basic and acidic residues; that stretch reads EENKPSCKADDNNKDRAISTPTQDHRSGEESGISRRTSESKTETHARL. The segment covering 107–121 has biased composition (polar residues); the sequence is DQQSIHRASRRGTSP. Composition is skewed to basic and acidic residues over residues 132–144 and 151–167; these read RNTRIDEDSPNER and LTDEDRKMAEDSNKREE. A compositionally biased stretch (polar residues) spans 190 to 208; sequence RTNNNGRSMETSSTHSTRI. Positions 239-253 are enriched in basic and acidic residues; the sequence is TRSERTQNSELHKST. Positions 294–305 are enriched in polar residues; the sequence is YTMNNANNNTKS. The segment at 344–411 is multimerization; the sequence is FELSRSASHV…SSRDLHKRFS (68 aa). Residues 387 to 416 adopt a coiled-coil conformation; that stretch reads EENRTLLKQIQEEINSSRDLHKRFSEYQKE. Positions 412–445 are l protein binding; it reads EYQKEQNSLMMANLSTLHIITDRGGKTGDPSDTT. Residues 434–455 form a disordered region; the sequence is RGGKTGDPSDTTRSPSVFTKGK. Residues 441 to 450 show a composition bias toward polar residues; that stretch reads PSDTTRSPSV. The interaction with the nucleocapsid (N-RNA) stretch occupies residues 479-568; it reads DLIREDELRD…FEEDIDSLTN (90 aa).

The protein belongs to the respirovirus P protein family. As to quaternary structure, homotetramer. Interacts (via multimerization domain) with polymerase L; this interaction forms the polymerase complex. Interacts (via N-terminus) with N0; this interaction allows P to chaperon N0 before encapsidation and form the N-P complex. Interacts (via C-terminus) with N-RNA template; this interaction positions the polymerase on the template.

Essential cofactor of the RNA polymerase L that plays a central role in the transcription and replication by forming the polymerase complex with RNA polymerase L and recruiting L to the genomic N-RNA template for RNA synthesis. Also plays a central role in the encapsidation of nascent RNA chains by forming the encapsidation complex with the nucleocapsid protein N (N-P complex). Acts as a chaperone for newly synthesized free N protein, so-called N0, allowing encapsidation of nascent RNA chains during replication. The nucleoprotein protein N prevents excessive phosphorylation of P, which leads to down-regulation of viral transcription/ replication. Participates, together with N, in the formation of viral factories (viroplasms), which are large inclusions in the host cytoplasm where replication takes place. Recruits host PI4KB and remodel the host endoplasmic reticulum membrane to form viral replication factories. The chain is Phosphoprotein (P/C) from Human parainfluenza 1 virus (strain C39) (HPIV-1).